The sequence spans 492 residues: Nuclear hormone receptor family member nhr-4 (492 aa).

The segment at residues 47 to 122 (RLICDVCGDV…VGMNPDSVQN (76 aa)) is a DNA-binding region (nuclear receptor). 2 consecutive NR C4-type zinc fingers follow at residues 50–70 (CDVCGDVAFGKHYGINACNGC) and 86–110 (CRFGGDCPVVKEHRNVCRSCRLKKC). A disordered region spans residues 121 to 143 (QNERDRNAKNGGMGGPMSSPTQS). Residues 215–481 (MDFSIHSAVL…ELIQATHKTT (267 aa)) form the NR LBD domain.

It belongs to the nuclear hormone receptor family.

The protein resides in the nucleus. Its function is as follows. Orphan nuclear receptor. The chain is Nuclear hormone receptor family member nhr-4 (nhr-4) from Caenorhabditis elegans.